We begin with the raw amino-acid sequence, 424 residues long: Glycerol-3-phosphate dehydrogenase [NAD(+)] (424 aa).

Residues 79 to 84 (GSGNWG), Phe111, and Phe167 each bind NAD(+). Lys190 serves as a coordination point for substrate. Residue Ala223 participates in NAD(+) binding. Lys283 serves as the catalytic Proton acceptor. Positions 348 and 377 each coordinate NAD(+). 348–349 (RN) contributes to the substrate binding site.

It belongs to the NAD-dependent glycerol-3-phosphate dehydrogenase family.

The catalysed reaction is sn-glycerol 3-phosphate + NAD(+) = dihydroxyacetone phosphate + NADH + H(+). This Eremothecium gossypii (strain ATCC 10895 / CBS 109.51 / FGSC 9923 / NRRL Y-1056) (Yeast) protein is Glycerol-3-phosphate dehydrogenase [NAD(+)] (GPD).